The following is a 388-amino-acid chain: Arginine biosynthesis bifunctional protein ArgJ (388 aa).

6 residues coordinate substrate: threonine 150, lysine 172, threonine 183, glutamate 263, asparagine 383, and threonine 388. The active-site Nucleophile is threonine 183.

The protein belongs to the ArgJ family. Heterotetramer of two alpha and two beta chains.

It localises to the cytoplasm. The enzyme catalyses N(2)-acetyl-L-ornithine + L-glutamate = N-acetyl-L-glutamate + L-ornithine. The catalysed reaction is L-glutamate + acetyl-CoA = N-acetyl-L-glutamate + CoA + H(+). The protein operates within amino-acid biosynthesis; L-arginine biosynthesis; L-ornithine and N-acetyl-L-glutamate from L-glutamate and N(2)-acetyl-L-ornithine (cyclic): step 1/1. It participates in amino-acid biosynthesis; L-arginine biosynthesis; N(2)-acetyl-L-ornithine from L-glutamate: step 1/4. In terms of biological role, catalyzes two activities which are involved in the cyclic version of arginine biosynthesis: the synthesis of N-acetylglutamate from glutamate and acetyl-CoA as the acetyl donor, and of ornithine by transacetylation between N(2)-acetylornithine and glutamate. The sequence is that of Arginine biosynthesis bifunctional protein ArgJ from Corynebacterium efficiens (strain DSM 44549 / YS-314 / AJ 12310 / JCM 11189 / NBRC 100395).